A 529-amino-acid polypeptide reads, in one-letter code: 3-ketoacyl-CoA synthase 20 (529 aa).

Positions 1–22 (MSHNQNQPHRPVPVHVTNAEPN) are disordered. Helical transmembrane passes span 52–72 (LYIL…SFTI) and 84–104 (FHFL…TAYF). The 294-residue stretch at 103–396 (YFTTRPRRVF…FFATLVARKV (294 aa)) folds into the FAE domain. Catalysis depends on residues cysteine 247, histidine 326, histidine 415, histidine 419, and asparagine 452.

This sequence belongs to the thiolase-like superfamily. Chalcone/stilbene synthases family. Expressed in aerial organs. Expressed in leaves, flowers, siliques and stems. Expressed in roots, young seedlings, leaves, flowers and siliques.

It is found in the membrane. It catalyses the reaction a very-long-chain acyl-CoA + malonyl-CoA + H(+) = a very-long-chain 3-oxoacyl-CoA + CO2 + CoA. It participates in lipid metabolism; fatty acid biosynthesis. With respect to regulation, inhibited by K3 herbicides such as alachlor, allidochlor, anilofos, cafenstrole, fentrazamide and flufenacet. Strongly inhibited by metazachlor and only slightly by mefluidide. In terms of biological role, mediates the synthesis of VLCFAs from 22 to 26 carbons in length (e.g. C22, C24, C26). Functionally redundant with KCS2 in the two-carbon elongation of C22 fatty acids that is required for cuticular wax and root suberin biosynthesis. This is 3-ketoacyl-CoA synthase 20 from Arabidopsis thaliana (Mouse-ear cress).